The primary structure comprises 229 residues: Ribonuclease 3 (229 aa).

Residues 5 to 127 (LSRLERQLGY…LIGAIYLDAG (123 aa)) form the RNase III domain. Position 40 (Glu40) interacts with Mg(2+). Residue Asp44 is part of the active site. Mg(2+) is bound by residues Asp113 and Glu116. Residue Glu116 is part of the active site. One can recognise a DRBM domain in the interval 154 to 224 (DPKTRLQEFL…AAAALIALGV (71 aa)).

This sequence belongs to the ribonuclease III family. In terms of assembly, homodimer. Requires Mg(2+) as cofactor.

It is found in the cytoplasm. The catalysed reaction is Endonucleolytic cleavage to 5'-phosphomonoester.. Functionally, digests double-stranded RNA. Involved in the processing of primary rRNA transcript to yield the immediate precursors to the large and small rRNAs (23S and 16S). Processes some mRNAs, and tRNAs when they are encoded in the rRNA operon. Processes pre-crRNA and tracrRNA of type II CRISPR loci if present in the organism. This Pseudomonas fluorescens (strain Pf0-1) protein is Ribonuclease 3.